The sequence spans 334 residues: WD repeat-containing protein 54 (334 aa).

WD repeat units lie at residues 162–206 (GHQM…TLLT), 208–247 (IPGFGVPCPSVQLWQGIIAAGYGNGQVHLYEATTGNLHVQ), and 250–289 (AHARAICALDLASEVGKLLSAGEDTFVHIWKLSRNPESGY).

As to quaternary structure, homodimer and homotrimer; forms tight forms of dimers and trimers. Interacts with IZUMO1 and IZUMO1R/JUNO. Post-translationally, cross-linked to tightly form both dimers and trimers by TGM2. Cross-linking enhances the activation of EGF receptor-mediated signaling pathway. Cross-linking is inhibited by EGF. In terms of processing, ubiquitinated. EGF increases ubiquitination. In terms of tissue distribution, expressed in epithelial cells (at protein level). Isoform 3 expression is highly increased in colorectal cancer cells.

Its subcellular location is the vesicle. It localises to the cytoplasm. It is found in the cell membrane. Functionally, plays a role in the adhesion and fusion of the sperm-oocyte membrane through its interactions with IZUMO1 and IZUMO1R/JUNO. When cross-linked to form dimers and trimers, it has a regulatory effect on ERK signaling pathway activity in response to EGF stimulation. Colocalizes with the EGF receptor in WDR54-specific vesicle where it sustains the internalization and controls the degradation of the EGF receptor after EGF stimulation. The sequence is that of WD repeat-containing protein 54 from Homo sapiens (Human).